We begin with the raw amino-acid sequence, 132 residues long: Small ribosomal subunit protein uS8 (132 aa).

It belongs to the universal ribosomal protein uS8 family. As to quaternary structure, part of the 30S ribosomal subunit. Contacts proteins S5 and S12.

In terms of biological role, one of the primary rRNA binding proteins, it binds directly to 16S rRNA central domain where it helps coordinate assembly of the platform of the 30S subunit. The protein is Small ribosomal subunit protein uS8 of Corynebacterium jeikeium (strain K411).